A 466-amino-acid chain; its full sequence is Probable periplasmic serine protease do/HhoA-like (466 aa).

A signal peptide spans 1 to 29 (MKKTRFVLNSIALGLSVLSTSFVAHVAQA). Active-site charge relay system residues include histidine 120, aspartate 150, and serine 226. PDZ domains are found at residues 270–361 (ILEF…LRDG) and 367–458 (KMKL…LRGD).

Belongs to the peptidase S1C family.

The protein localises to the periplasm. This chain is Probable periplasmic serine protease do/HhoA-like, found in Haemophilus influenzae (strain ATCC 51907 / DSM 11121 / KW20 / Rd).